Consider the following 371-residue polypeptide: Cytochrome b (371 aa).

4 helical membrane passes run 25–45 (FGSM…FLAV), 69–90 (WMMQ…YIHI), 105–125 (WMSG…GYVL), and 170–190 (FFAL…LHII). Heme b is bound by residues histidine 75 and histidine 89. Heme b contacts are provided by histidine 174 and histidine 188. Residue histidine 193 coordinates a ubiquinone. A run of 4 helical transmembrane segments spans residues 218–238 (HKDL…VSFF), 280–300 (LGGA…PFTH), 312–332 (FSQL…WAAT), and 339–358 (FIVI…LLIP).

Belongs to the cytochrome b family. As to quaternary structure, the cytochrome bc1 complex contains 3 respiratory subunits (MT-CYB, CYC1 and UQCRFS1), 2 core proteins (UQCRC1 and UQCRC2) and probably 6 low-molecular weight proteins. The cofactor is heme b.

Its subcellular location is the mitochondrion inner membrane. In terms of biological role, component of the ubiquinol-cytochrome c reductase complex (complex III or cytochrome b-c1 complex) that is part of the mitochondrial respiratory chain. The b-c1 complex mediates electron transfer from ubiquinol to cytochrome c. Contributes to the generation of a proton gradient across the mitochondrial membrane that is then used for ATP synthesis. The polypeptide is Cytochrome b (MT-CYB) (Leiopython albertisii (Northern white-lipped python)).